Reading from the N-terminus, the 105-residue chain is Delta-hexatoxin-Mg1a (105 aa).

An N-terminal signal peptide occupies residues 1–18 (MKTLVIACVALVLVVVHG). Positions 19–60 (EVIEEVNEKQLQESVEEKYSLLQRLEKLDEAITAEENRNSRV) are excised as a propeptide. Intrachain disulfides connect Cys-63/Cys-77, Cys-70/Cys-82, Cys-76/Cys-93, and Cys-78/Cys-105.

It belongs to the neurotoxin 06 (delta-actx) family. As to expression, expressed by the venom gland.

It localises to the secreted. Its function is as follows. Selectively slows channel inactivation of mammalian Nav1.1/SCN1A, Nav1.3/SCN3A, and Nav1.6/SCN8A and shows higher affinity for insect Nav1/para channels (site 3). Induces tonic repetitive firing of nerve impulses in insect neurons accompanied by plateau potentials. The protein is Delta-hexatoxin-Mg1a of Macrothele gigas (Japanese funnel web spider).